The following is a 144-amino-acid chain: Acidic phospholipase A2 S15-109 (144 aa).

A signal peptide spans 1–19 (MYPAHLLVLLAVCVSLLGA). Positions 20–27 (SDIPPQPL) are excised as a propeptide. 7 disulfide bridges follow: C38-C98, C54-C143, C56-C72, C71-C126, C78-C119, C87-C112, and C105-C117. Ca(2+) contacts are provided by Y55, G57, and G59. H75 is an active-site residue. D76 provides a ligand contact to Ca(2+). D120 is an active-site residue.

The protein belongs to the phospholipase A2 family. Group I subfamily. D49 sub-subfamily. Ca(2+) serves as cofactor. As to expression, expressed by the venom gland.

The protein localises to the secreted. The catalysed reaction is a 1,2-diacyl-sn-glycero-3-phosphocholine + H2O = a 1-acyl-sn-glycero-3-phosphocholine + a fatty acid + H(+). Snake venom phospholipase A2 (PLA2) that inhibits collagen-induced platelet aggregation. PLA2 catalyzes the calcium-dependent hydrolysis of the 2-acyl groups in 3-sn-phosphoglycerides. The sequence is that of Acidic phospholipase A2 S15-109 from Austrelaps superbus (Lowland copperhead snake).